We begin with the raw amino-acid sequence, 299 residues long: tRNA dimethylallyltransferase (299 aa).

Residue 8-15 (GPTASGKT) coordinates ATP. 10-15 (TASGKT) contacts substrate. Residues 33-36 (DSQQ) are interaction with substrate tRNA.

Belongs to the IPP transferase family. Monomer. Mg(2+) serves as cofactor.

It carries out the reaction adenosine(37) in tRNA + dimethylallyl diphosphate = N(6)-dimethylallyladenosine(37) in tRNA + diphosphate. Functionally, catalyzes the transfer of a dimethylallyl group onto the adenine at position 37 in tRNAs that read codons beginning with uridine, leading to the formation of N6-(dimethylallyl)adenosine (i(6)A). This is tRNA dimethylallyltransferase from Anaeromyxobacter dehalogenans (strain 2CP-C).